Reading from the N-terminus, the 225-residue chain is Imidazole glycerol phosphate synthase subunit HisH (225 aa).

Residues 5 to 220 enclose the Glutamine amidotransferase type-1 domain; it reads KNVIVDTGCA…LELDSTELNQ (216 aa). Catalysis depends on Cys80, which acts as the Nucleophile. Catalysis depends on residues His195 and Glu197.

Heterodimer of HisH and HisF.

Its subcellular location is the cytoplasm. The catalysed reaction is 5-[(5-phospho-1-deoxy-D-ribulos-1-ylimino)methylamino]-1-(5-phospho-beta-D-ribosyl)imidazole-4-carboxamide + L-glutamine = D-erythro-1-(imidazol-4-yl)glycerol 3-phosphate + 5-amino-1-(5-phospho-beta-D-ribosyl)imidazole-4-carboxamide + L-glutamate + H(+). It catalyses the reaction L-glutamine + H2O = L-glutamate + NH4(+). It functions in the pathway amino-acid biosynthesis; L-histidine biosynthesis; L-histidine from 5-phospho-alpha-D-ribose 1-diphosphate: step 5/9. Functionally, IGPS catalyzes the conversion of PRFAR and glutamine to IGP, AICAR and glutamate. The HisH subunit catalyzes the hydrolysis of glutamine to glutamate and ammonia as part of the synthesis of IGP and AICAR. The resulting ammonia molecule is channeled to the active site of HisF. This is Imidazole glycerol phosphate synthase subunit HisH from Colwellia psychrerythraea (strain 34H / ATCC BAA-681) (Vibrio psychroerythus).